A 154-amino-acid polypeptide reads, in one-letter code: Iron sulfur cluster assembly protein 1, mitochondrial (154 aa).

The protein belongs to the NifU family. In terms of assembly, component of the core Fe-S cluster (ISC) assembly machinery. [2Fe-2S] cluster serves as cofactor.

It is found in the mitochondrion matrix. It functions in the pathway cofactor biosynthesis; iron-sulfur cluster biosynthesis. In terms of biological role, scaffold protein for the de novo synthesis of iron-sulfur (Fe-S) clusters within mitochondria, which is required for maturation of both mitochondrial and cytoplasmic [2Fe-2S] and [4Fe-4S] proteins. First, a [2Fe-2S] cluster is transiently assembled on the scaffold protein ISU1. In a second step, the cluster is released from ISU1, transferred to a glutaredoxin, followed by the formation of mitochondrial [2Fe-2S] proteins, the synthesis of [4Fe-4S] clusters and their target-specific insertion into the recipient apoproteins. Cluster assembly on ISU1 depends on the function of the cysteine desulfurase complex NFS1-ISD11, which serves as the sulfur donor for cluster synthesis, the iron-binding protein frataxin as the putative iron donor, and the electron transfer chain comprised of ferredoxin reductase and ferredoxin, which receive their electrons from NADH. This Eremothecium gossypii (strain ATCC 10895 / CBS 109.51 / FGSC 9923 / NRRL Y-1056) (Yeast) protein is Iron sulfur cluster assembly protein 1, mitochondrial (ISU1).